The primary structure comprises 120 residues: Transcription elongation factor 1 homolog (120 aa).

Positions 25, 28, 49, and 52 each coordinate Zn(2+). The span at Glu-84–Asp-110 shows a compositional bias: acidic residues. Residues Glu-84 to Phe-120 form a disordered region.

The protein belongs to the ELOF1 family.

The protein resides in the nucleus. Transcription elongation factor implicated in the maintenance of proper chromatin structure in actively transcribed regions. The protein is Transcription elongation factor 1 homolog of Arabidopsis thaliana (Mouse-ear cress).